Reading from the N-terminus, the 274-residue chain is Acetyl-coenzyme A carboxylase carboxyl transferase subunit beta (274 aa).

The CoA carboxyltransferase N-terminal domain maps to 18-274 (IWTKCKKCDY…FYNRQCFLKF (257 aa)). 4 residues coordinate Zn(2+): cysteine 22, cysteine 25, cysteine 41, and cysteine 44. The C4-type zinc finger occupies 22–44 (CKKCDYILLQKDFEENLMVCPKC).

This sequence belongs to the AccD/PCCB family. In terms of assembly, acetyl-CoA carboxylase is a heterohexamer composed of biotin carboxyl carrier protein (AccB), biotin carboxylase (AccC) and two subunits each of ACCase subunit alpha (AccA) and ACCase subunit beta (AccD). Zn(2+) is required as a cofactor.

The protein resides in the cytoplasm. The catalysed reaction is N(6)-carboxybiotinyl-L-lysyl-[protein] + acetyl-CoA = N(6)-biotinyl-L-lysyl-[protein] + malonyl-CoA. Its pathway is lipid metabolism; malonyl-CoA biosynthesis; malonyl-CoA from acetyl-CoA: step 1/1. In terms of biological role, component of the acetyl coenzyme A carboxylase (ACC) complex. Biotin carboxylase (BC) catalyzes the carboxylation of biotin on its carrier protein (BCCP) and then the CO(2) group is transferred by the transcarboxylase to acetyl-CoA to form malonyl-CoA. The polypeptide is Acetyl-coenzyme A carboxylase carboxyl transferase subunit beta (Endomicrobium trichonymphae).